The sequence spans 186 residues: Chromosomal replication initiator protein DnaA (186 aa).

Residue Glu1 is a region of interest, domain I, interacts with DnaA modulators. Residue Glu1 is a region of interest, domain II. The interval 1–99 (EFFKTFNALI…GALNKVTHTS (99 aa)) is domain III, AAA+ region. Positions 100–186 (LIGRSMTVES…GRNFGGRDHT (87 aa)) are domain IV, binds dsDNA.

Belongs to the DnaA family. In terms of assembly, oligomerizes as a right-handed, spiral filament on DNA at oriC.

Its subcellular location is the cytoplasm. Functionally, plays an essential role in the initiation and regulation of chromosomal replication. ATP-DnaA binds to the origin of replication (oriC) to initiate formation of the DNA replication initiation complex once per cell cycle. Binds the DnaA box (a 9 base pair repeat at the origin) and separates the double-stranded (ds)DNA. Forms a right-handed helical filament on oriC DNA; dsDNA binds to the exterior of the filament while single-stranded (ss)DNA is stabiized in the filament's interior. The ATP-DnaA-oriC complex binds and stabilizes one strand of the AT-rich DNA unwinding element (DUE), permitting loading of DNA polymerase. After initiation quickly degrades to an ADP-DnaA complex that is not apt for DNA replication. Binds acidic phospholipids. The polypeptide is Chromosomal replication initiator protein DnaA (Wolbachia sp).